Reading from the N-terminus, the 769-residue chain is Serine protease HtrA-like (769 aa).

Over residues 1–20 (MDIGKKHVIPKSQYRRKRRE) the composition is skewed to basic residues. The tract at residues 1 to 390 (MDIGKKHVIP…ATSKLNKGRA (390 aa)) is disordered. Basic and acidic residues-rich tracts occupy residues 21 to 64 (FFHN…ERFK) and 71 to 108 (LEQR…DVSK). A compositionally biased stretch (polar residues) spans 126-137 (YEQNSEATLSTK). Positions 138 to 186 (STDKVESTDMRKLSSDKNKVGHEEQHVLSKPSEHDKETRIDFESSRTDS) are enriched in basic and acidic residues. Polar residues predominate over residues 247–262 (QQSQNEQTKTYTYGDS). Composition is skewed to basic and acidic residues over residues 264-296 (QNDK…HIVD) and 310-330 (KTDD…HKQN). Residues 331-347 (ADSSETVGYQSQSSASH) show a composition bias toward polar residues. Over residues 348 to 364 (RITEKRNNAINDHDKLN) the composition is skewed to basic and acidic residues. A compositionally biased stretch (polar residues) spans 366 to 390 (QKPNAKTSANNNQKKATSKLNKGRA). The helical transmembrane segment at 410–430 (LVILMGIIILIVILNAIFNNV) threads the bilayer. Catalysis depends on charge relay system residues histidine 504, aspartate 534, and serine 619. In terms of domain architecture, PDZ spans 680-733 (IASLNSFERQAVKLPGKVKNGVVVDQVDNNGLADQSGLKKGDVITELDGKLLED).

This sequence belongs to the peptidase S1C family.

It localises to the cell membrane. This Staphylococcus aureus (strain MSSA476) protein is Serine protease HtrA-like.